The primary structure comprises 1010 residues: Antigenic heat-stable 120 kDa protein (1010 aa).

2 disordered regions span residues 1-34 (DTSEFDPLANKEYTEEQKQTLEQEQKEFLSQTTT) and 347-396 (GQSK…QSQQ). Residues 12–27 (EYTEEQKQTLEQEQKE) show a composition bias toward basic and acidic residues. 2 stretches are compositionally biased toward polar residues: residues 347 to 372 (GQSKEQPLITPQQTTSSSVEPPQHKQ) and 379 to 396 (PTNQPLQPETSQMPQSQQ).

Its subcellular location is the cytoplasm. The sequence is that of Antigenic heat-stable 120 kDa protein (sca4) from Rickettsia parkeri.